Consider the following 1287-residue polypeptide: Pullulanase A (1287 aa).

An N-terminal signal peptide occupies residues 1–44 (MRKTPSHTEKKMVYSIRSLKNGTGSVLIGASLVLLAMATPTISS). Residues 42–139 (ISSDESTPTT…VTTETKAEEP (98 aa)) are disordered. Over residues 48–61 (TPTTNEPNNRNTTT) the composition is skewed to low complexity. Over residues 79-90 (DISSPGNANASL) the composition is skewed to polar residues. 2 stretches are compositionally biased toward low complexity: residues 99-113 (TEPT…DPAP) and 122-133 (EPTTSTSPVTTE). Residues 163-165 (WTW), Trp175, Asp221, 270-272 (WYW), Trp283, Lys325, and Asn330 contribute to the substrate site. Ca(2+) is bound by residues Ser668 and Tyr670. Substrate contacts are provided by residues 674–675 (YD) and Phe750. Asp785 (nucleophile) is an active-site residue. The active-site Proton donor is the Glu814. Residue Trp816 participates in substrate binding. Residues Met835, Thr838, and Asp839 each contribute to the Ca(2+) site. 3 residues coordinate substrate: Asp846, Arg849, and Tyr856. Ca(2+) is bound by residues Asp889 and Asp893. Substrate-binding positions include Asn903, Lys976, and 996–998 (DSY). Asp999 is a Ca(2+) binding site. The segment at 1147 to 1255 (VSQNGTSHES…TPDRQAELPN (109 aa)) is disordered. The segment covering 1156–1203 (STAEEKPDSTPSKPEHQNEASHPAHQDPAPEARPDSTKPDAKVADAEN) has biased composition (basic and acidic residues). Residues 1212–1225 (SQAEQPAQEAQASS) are compositionally biased toward low complexity. The span at 1228–1239 (EAVRKESVENSS) shows a compositional bias: basic and acidic residues. The LPXTG sorting signal signature appears at 1253–1257 (LPNTG). At Thr1256 the chain carries Pentaglycyl murein peptidoglycan amidated threonine. Positions 1257 to 1287 (GIKNENKLLFAGISLLALLGLGFLLKNKKEN) are cleaved as a propeptide — removed by sortase.

The protein belongs to the glycosyl hydrolase 13 family.

Its subcellular location is the secreted. It is found in the cell wall. The protein localises to the cell surface. It carries out the reaction Hydrolysis of (1-&gt;6)-alpha-D-glucosidic linkages in pullulan, amylopectin and glycogen, and in the alpha- and beta-limit dextrins of amylopectin and glycogen.. Its activity is regulated as follows. Inhibited by 4-O-alpha-D-glucopyranosylmoranoline (G1M). Functionally, virulence factor. Involved in the degradation of glycogen of the mammalian host cells. Hydrolyzes the alpha-1,6-branchpoints of glycogen. Hydrolyzes pullulan. Does not hydrolyze dextran. Binds to mouse lung alveolar type II cells that are rich in glycogen stores. Is an alpha-glucan-specific carbohydrate-binding protein, which binds to amylose (pure alpha-(1,4)-linked glucose), amylopectin (alpha-(1,4)-linked glucose with alpha-(1,6) branch points), pullulan (linear polymer of mixed alpha-(1,4)- and alpha-(1,6)-linked glucose) and glycogen (similar to amylopectin with more frequent alpha-(1,6) branch points) in vitro. Does not bind to dextran (a linear polymer of alpha-(1,6)-linked glucose). This Streptococcus pneumoniae protein is Pullulanase A.